Here is a 610-residue protein sequence, read N- to C-terminus: Butyryl-CoA dehydrogenase Swol_1933 (610 aa).

The Proton acceptor role is filled by Glu451.

The protein belongs to the acyl-CoA dehydrogenase family. FAD is required as a cofactor.

The protein localises to the cytoplasm. The catalysed reaction is butanoyl-CoA + oxidized [electron-transfer flavoprotein] + H(+) = (2E)-butenoyl-CoA + reduced [electron-transfer flavoprotein]. It catalyses the reaction a short-chain 2,3-saturated fatty acyl-CoA + oxidized [electron-transfer flavoprotein] + H(+) = a short-chain (2E)-enoyl-CoA + reduced [electron-transfer flavoprotein]. Its pathway is lipid metabolism; butanoate metabolism. Functionally, involved in syntrophic growth of S.wolfei with butyrate, as part of the butyrate oxidation pathway. Catalyzes the oxidation of butanoyl-CoA to crotonyl-CoA. Probably passes the electrons released by this reaction on to electron-transfer flavoproteins (EtfAB) to finally generate hydrogen and/or formate. The sequence is that of Butyryl-CoA dehydrogenase Swol_1933 from Syntrophomonas wolfei subsp. wolfei (strain DSM 2245B / Goettingen).